The chain runs to 270 residues: Putative ABC transporter ATP-binding protein MG304 homolog (270 aa).

Residues 2 to 232 (LNVTNLSFTY…LHLFHQHHFT (231 aa)) enclose the ABC transporter domain. Position 36–43 (36–43 (GHNGSGKS)) interacts with ATP.

Belongs to the ABC transporter superfamily.

This is Putative ABC transporter ATP-binding protein MG304 homolog from Mycoplasma pneumoniae (strain ATCC 29342 / M129 / Subtype 1) (Mycoplasmoides pneumoniae).